The primary structure comprises 280 residues: Diaminopimelate epimerase (280 aa).

Asn-13 and Asn-67 together coordinate substrate. Cys-76 acts as the Proton donor in catalysis. Substrate is bound by residues Gly-77–Asn-78, Asn-191, and Glu-208–Arg-209. Cys-218 acts as the Proton acceptor in catalysis. Residue Gly-219–Thr-220 coordinates substrate.

The protein belongs to the diaminopimelate epimerase family. Homodimer.

The protein resides in the cytoplasm. The enzyme catalyses (2S,6S)-2,6-diaminopimelate = meso-2,6-diaminopimelate. It participates in amino-acid biosynthesis; L-lysine biosynthesis via DAP pathway; DL-2,6-diaminopimelate from LL-2,6-diaminopimelate: step 1/1. Functionally, catalyzes the stereoinversion of LL-2,6-diaminopimelate (L,L-DAP) to meso-diaminopimelate (meso-DAP), a precursor of L-lysine. The polypeptide is Diaminopimelate epimerase (Archaeoglobus fulgidus (strain ATCC 49558 / DSM 4304 / JCM 9628 / NBRC 100126 / VC-16)).